We begin with the raw amino-acid sequence, 155 residues long: Ciliary microtubule inner protein 2C (155 aa).

This sequence belongs to the CIMIP2 family.

It is found in the cytoplasm. It localises to the cytoskeleton. The protein localises to the cilium axoneme. Its function is as follows. Microtubule inner protein (MIP) part of the dynein-decorated doublet microtubules (DMTs) in cilia axoneme, which is required for motile cilia beating. The polypeptide is Ciliary microtubule inner protein 2C (cimip2cb) (Xenopus laevis (African clawed frog)).